Reading from the N-terminus, the 440-residue chain is Asparagine--tRNA ligase (440 aa).

The protein belongs to the class-II aminoacyl-tRNA synthetase family. In terms of assembly, homodimer.

Its subcellular location is the cytoplasm. The catalysed reaction is tRNA(Asn) + L-asparagine + ATP = L-asparaginyl-tRNA(Asn) + AMP + diphosphate + H(+). The sequence is that of Asparagine--tRNA ligase from Chloroflexus aurantiacus (strain ATCC 29364 / DSM 637 / Y-400-fl).